The sequence spans 144 residues: Large ribosomal subunit protein uL15 (144 aa).

The segment at 1-53 (MRLNTLSPAEGAKHSAKRLGRGIGSGLGKTGGRGHKGQKSRTGGGVRRGFEGG) is disordered. The span at 21–31 (RGIGSGLGKTG) shows a compositional bias: gly residues.

This sequence belongs to the universal ribosomal protein uL15 family. As to quaternary structure, part of the 50S ribosomal subunit.

Its function is as follows. Binds to the 23S rRNA. In Haemophilus influenzae (strain ATCC 51907 / DSM 11121 / KW20 / Rd), this protein is Large ribosomal subunit protein uL15.